Reading from the N-terminus, the 87-residue chain is NADH-ubiquinone oxidoreductase chain 4L (87 aa).

Helical transmembrane passes span 22 to 42 and 49 to 69; these read FLSFLILMEFLVITVLFFIIG and LFLIFLVFSVCELVLGLSLLV.

It belongs to the complex I subunit 4L family.

The protein resides in the mitochondrion membrane. It catalyses the reaction a ubiquinone + NADH + 5 H(+)(in) = a ubiquinol + NAD(+) + 4 H(+)(out). In terms of biological role, core subunit of the mitochondrial membrane respiratory chain NADH dehydrogenase (Complex I) that is believed to belong to the minimal assembly required for catalysis. Complex I functions in the transfer of electrons from NADH to the respiratory chain. The immediate electron acceptor for the enzyme is believed to be ubiquinone. This Apis mellifera ligustica (Common honeybee) protein is NADH-ubiquinone oxidoreductase chain 4L (ND4L).